The chain runs to 73 residues: uncharacterized protein (73 aa).

A helical transmembrane segment spans residues 37 to 57 (AIIITVAVVAFGALTLGAIGA).

The protein localises to the membrane. This is an uncharacterized protein from Natronomonas pharaonis (strain ATCC 35678 / DSM 2160 / CIP 103997 / JCM 8858 / NBRC 14720 / NCIMB 2260 / Gabara) (Halobacterium pharaonis).